The chain runs to 363 residues: S-adenosylmethionine:tRNA ribosyltransferase-isomerase (363 aa).

This sequence belongs to the QueA family. Monomer.

Its subcellular location is the cytoplasm. It catalyses the reaction 7-aminomethyl-7-carbaguanosine(34) in tRNA + S-adenosyl-L-methionine = epoxyqueuosine(34) in tRNA + adenine + L-methionine + 2 H(+). It functions in the pathway tRNA modification; tRNA-queuosine biosynthesis. Transfers and isomerizes the ribose moiety from AdoMet to the 7-aminomethyl group of 7-deazaguanine (preQ1-tRNA) to give epoxyqueuosine (oQ-tRNA). This is S-adenosylmethionine:tRNA ribosyltransferase-isomerase from Haemophilus influenzae (strain 86-028NP).